The following is a 298-amino-acid chain: Cytochrome c oxidase subunit 2 (298 aa).

The first 29 residues, methionine 1–alanine 29, serve as a signal peptide directing secretion. A Pyrrolidone carboxylic acid modification is found at glutamine 30. The Periplasmic segment spans residues glutamine 30–proline 55. Residues leucine 56–arginine 88 form a helical membrane-spanning segment. Residues phenylalanine 89–asparagine 103 are Cytoplasmic-facing. A helical membrane pass occupies residues threonine 104–glutamate 134. Topologically, residues methionine 135–alanine 280 are periplasmic. 6 residues coordinate Cu cation: histidine 210, cysteine 245, glutamate 247, cysteine 249, histidine 253, and methionine 256. A propeptide spans alanine 281–glutamate 298 (C-terminal propeptide).

The protein belongs to the cytochrome c oxidase subunit 2 family. The cofactor is binuclear copper center (CuA).

It is found in the cell inner membrane. The enzyme catalyses 4 Fe(II)-[cytochrome c] + O2 + 8 H(+)(in) = 4 Fe(III)-[cytochrome c] + 2 H2O + 4 H(+)(out). Its function is as follows. Subunits I and II form the functional core of the enzyme complex. Electrons originating in cytochrome c are transferred via heme a and Cu(A) to the binuclear center formed by heme a3 and Cu(B). This is Cytochrome c oxidase subunit 2 (ctaC) from Paracoccus denitrificans.